A 545-amino-acid chain; its full sequence is MELLLPHASNSCPLTVLGFLERAASVFGDSPSLLHTTTVHTWSETHSRCLRIASTLSSASLGINRGQVVSVIGPNVPSVYELQFAVPMSGAVLNNINPRLDAHALSVLLRHSESKLVFVDHHSSSLVLEAVSFLPKDERPRLVILNDGNDMPSSSSADMDFLDTYEGFMERGDLRFKWVRPKSEWTPMVLNYTSGTTSSPKGVVHSHRSVFMSTINSLLDWSLPNRPVYLWTLPMFHANGWSYTWATAAVGARNICVTRVDVPTIFNLIDKYQVTHMCAAPMVLNMLTNHPAQKPLQSPVKVMTAGAPPPATVISKAEALGFDVSHGYGMTETGGLVVSCALKPEWDRLEPDERAKQKSRQGIRTAVFAEVDVRDPISGKSVKHDGATVGEIVFRGGSVMLGYYKDPEGTAASMREDGWFYTGDIGVMHPDGYLEVKDRSKDVVICGGENISSTELEAVLYTNPAIKEAAVVAKPDKMWGETPCAFVSLKYHDGSVTEREIREFCKTKLPKYMVPRNVVFLEELPKTSTGKIQKFLLRQMAKSLP.

This sequence belongs to the ATP-dependent AMP-binding enzyme family. As to expression, expressed in roots, leaves, stems, flowers and developing seeds.

In terms of biological role, may act as an acid--thiol ligase that activates carboxylic acids by forming acyl-CoAs. This Arabidopsis thaliana (Mouse-ear cress) protein is Probable acyl-activating enzyme 4 (AEE4).